A 278-amino-acid polypeptide reads, in one-letter code: Small ribosomal subunit protein uS2 (278 aa).

The tract at residues 235–278 is disordered; the sequence is AEAAEEAPKRERKAKAAVKKERTKKEDDDALNANVAGKFAKDEE. A compositionally biased stretch (basic and acidic residues) spans 252–261; sequence VKKERTKKED.

Belongs to the universal ribosomal protein uS2 family.

The polypeptide is Small ribosomal subunit protein uS2 (Parabacteroides distasonis (strain ATCC 8503 / DSM 20701 / CIP 104284 / JCM 5825 / NCTC 11152)).